Reading from the N-terminus, the 200-residue chain is MAGLKQHSGLVVPLDAANVDTDAIIPKQFLQAITRVGFGKHLFHEWRYLDAEETQPNPEFVLNFPQYQGASILLARKNLGCGSSREHAPWALADYGFKVMIAPSFADIFYNNSLNNHMLPIKLSEQEVEEIFQWVWANPGKKIDVDLEAKTVTVGEKVYHFDLDEFRRHCLLEGLDNIGLTLQHEDAIAAYESKIPAFLR.

This sequence belongs to the LeuD family. LeuD type 1 subfamily. As to quaternary structure, heterodimer of LeuC and LeuD.

It catalyses the reaction (2R,3S)-3-isopropylmalate = (2S)-2-isopropylmalate. It functions in the pathway amino-acid biosynthesis; L-leucine biosynthesis; L-leucine from 3-methyl-2-oxobutanoate: step 2/4. Its function is as follows. Catalyzes the isomerization between 2-isopropylmalate and 3-isopropylmalate, via the formation of 2-isopropylmaleate. The sequence is that of 3-isopropylmalate dehydratase small subunit 2 from Mannheimia succiniciproducens (strain KCTC 0769BP / MBEL55E).